We begin with the raw amino-acid sequence, 1116 residues long: Cation channel sperm-associated auxiliary subunit beta (1116 aa).

The Extracellular segment spans residues 1 to 1053; sequence MESPLIYVSV…QIYVDEAPLP (1053 aa). A disulfide bridge links Cys35 with Cys60. N-linked (GlcNAc...) asparagine glycans are attached at residues Asn90, Asn100, Asn118, Asn226, and Asn321. Cys189 and Cys302 are disulfide-bonded. Cys330 and Cys343 are oxidised to a cystine. N-linked (GlcNAc...) asparagine glycosylation is found at Asn618 and Asn690. Intrachain disulfides connect Cys718/Cys816, Cys829/Cys1037, Cys911/Cys920, and Cys922/Cys937. Asn913 and Asn921 each carry an N-linked (GlcNAc...) asparagine glycan. N-linked (GlcNAc...) asparagine glycans are attached at residues Asn1010 and Asn1015. Residues 1054-1076 traverse the membrane as a helical segment; it reads FPGHTLIAVATAVVLGGLIFIAF. Residues 1077-1116 are Cytoplasmic-facing; that stretch reads MFQLQGIHPWRTFQRWIRRNQEKFSSISLSELIHRSKSEE.

In terms of assembly, component of the CatSper complex or CatSpermasome composed of the core pore-forming members CATSPER1, CATSPER2, CATSPER3 and CATSPER4 as well as auxiliary members CATSPERB, CATSPERG, CATSPERD, CATSPERE, CATSPERZ, C2CD6/CATSPERT, TMEM249, TMEM262 and EFCAB9. HSPA1 may be an additional auxiliary complex member. The core complex members CATSPER1, CATSPER2, CATSPER3 and CATSPER4 form a heterotetrameric channel. The auxiliary CATSPERB, CATSPERG, CATSPERD and CATSPERE subunits form a pavilion-like structure over the pore which stabilizes the complex through interactions with CATSPER4, CATSPER3, CATSPER1 and CATSPER2 respectively. TMEM262/CATSPERH interacts with CATSPERB, further stabilizing the complex. C2CD6/CATSPERT interacts at least with CATSPERD and is required for targeting the CatSper complex in the flagellar membrane.

The protein localises to the cell projection. It is found in the cilium. The protein resides in the flagellum membrane. Its function is as follows. Auxiliary component of the CatSper complex, a complex involved in sperm cell hyperactivation. Sperm cell hyperactivation is needed for sperm motility which is essential late in the preparation of sperm for fertilization. The protein is Cation channel sperm-associated auxiliary subunit beta of Homo sapiens (Human).